The sequence spans 382 residues: uncharacterized protein (382 aa).

Helical transmembrane passes span 8 to 28 (VMLLLCGLLLLTLAIAVLNTL), 45 to 65 (MVSSSYFTGNLVGTLFTGYLI), 75 to 95 (YLASLIFAAGCVGLGGMVGFW), 102 to 122 (FIAGIGCAMIWVVVESALMCS), 131 to 151 (LLAAYMMAYYMGTFLGQLLVS), 157 to 177 (LLHVLPWVTGMILAGILPLLF), 204 to 224 (LGVNGCIISGIVLGSLYGLMP), 231 to 251 (GMANASIGFWMAVLVSAGILG), 274 to 294 (VVILGSIAMLTQAAMAPALFI), 325 to 345 (ALLLSYTVGSLLGPSFAAMLM), and 349 to 369 (SDNLLFIMIASVSFIYLLMLL).

The protein belongs to the major facilitator superfamily. YcaD (TC 2.A.1.26) family.

The protein localises to the cell inner membrane. This is an uncharacterized protein from Salmonella gallinarum (strain 287/91 / NCTC 13346).